Here is a 193-residue protein sequence, read N- to C-terminus: dTTP/UTP pyrophosphatase (193 aa).

The Proton acceptor role is filled by aspartate 75.

Belongs to the Maf family. YhdE subfamily. The cofactor is a divalent metal cation.

Its subcellular location is the cytoplasm. It carries out the reaction dTTP + H2O = dTMP + diphosphate + H(+). The catalysed reaction is UTP + H2O = UMP + diphosphate + H(+). In terms of biological role, nucleoside triphosphate pyrophosphatase that hydrolyzes dTTP and UTP. May have a dual role in cell division arrest and in preventing the incorporation of modified nucleotides into cellular nucleic acids. The sequence is that of dTTP/UTP pyrophosphatase from Koribacter versatilis (strain Ellin345).